A 445-amino-acid polypeptide reads, in one-letter code: Ribosomal protein uS12 methylthiotransferase RimO (445 aa).

Positions 4 to 119 (IKVALVSLGC…LLESIKVFLK (116 aa)) constitute an MTTase N-terminal domain. The [4Fe-4S] cluster site is built by Cys13, Cys48, Cys82, Cys156, Cys160, and Cys163. Residues 142–372 (TTPTYTAYVR…MILQQSISKD (231 aa)) form the Radical SAM core domain. A TRAM domain is found at 375–441 (KEKIGKIYEV…EYDLIGVVYN (67 aa)).

Belongs to the methylthiotransferase family. RimO subfamily. Requires [4Fe-4S] cluster as cofactor.

Its subcellular location is the cytoplasm. The catalysed reaction is L-aspartate(89)-[ribosomal protein uS12]-hydrogen + (sulfur carrier)-SH + AH2 + 2 S-adenosyl-L-methionine = 3-methylsulfanyl-L-aspartate(89)-[ribosomal protein uS12]-hydrogen + (sulfur carrier)-H + 5'-deoxyadenosine + L-methionine + A + S-adenosyl-L-homocysteine + 2 H(+). In terms of biological role, catalyzes the methylthiolation of an aspartic acid residue of ribosomal protein uS12. The polypeptide is Ribosomal protein uS12 methylthiotransferase RimO (Clostridium botulinum (strain Okra / Type B1)).